A 591-amino-acid chain; its full sequence is Aspartate--tRNA ligase (591 aa).

Glu173 is a binding site for L-aspartate. The interval 197-200 is aspartate; sequence QLFK. Position 219 (Arg219) interacts with L-aspartate. ATP is bound by residues 219-221 and Gln228; that span reads RDE. His448 serves as a coordination point for L-aspartate. Position 482 (Glu482) interacts with ATP. Arg489 lines the L-aspartate pocket. 534-537 is a binding site for ATP; the sequence is GLDR.

The protein belongs to the class-II aminoacyl-tRNA synthetase family. Type 1 subfamily. In terms of assembly, homodimer.

It localises to the cytoplasm. The enzyme catalyses tRNA(Asp) + L-aspartate + ATP = L-aspartyl-tRNA(Asp) + AMP + diphosphate. Catalyzes the attachment of L-aspartate to tRNA(Asp) in a two-step reaction: L-aspartate is first activated by ATP to form Asp-AMP and then transferred to the acceptor end of tRNA(Asp). The polypeptide is Aspartate--tRNA ligase (Shewanella sp. (strain MR-4)).